We begin with the raw amino-acid sequence, 311 residues long: Acetyl-coenzyme A carboxylase carboxyl transferase subunit alpha (311 aa).

Residues 36 to 286 (NLEKETQKVY…SDYVLKAIEE (251 aa)) form the CoA carboxyltransferase C-terminal domain.

This sequence belongs to the AccA family. In terms of assembly, acetyl-CoA carboxylase is a heterohexamer composed of biotin carboxyl carrier protein (AccB), biotin carboxylase (AccC) and two subunits each of ACCase subunit alpha (AccA) and ACCase subunit beta (AccD).

It localises to the cytoplasm. The enzyme catalyses N(6)-carboxybiotinyl-L-lysyl-[protein] + acetyl-CoA = N(6)-biotinyl-L-lysyl-[protein] + malonyl-CoA. It functions in the pathway lipid metabolism; malonyl-CoA biosynthesis; malonyl-CoA from acetyl-CoA: step 1/1. In terms of biological role, component of the acetyl coenzyme A carboxylase (ACC) complex. First, biotin carboxylase catalyzes the carboxylation of biotin on its carrier protein (BCCP) and then the CO(2) group is transferred by the carboxyltransferase to acetyl-CoA to form malonyl-CoA. The chain is Acetyl-coenzyme A carboxylase carboxyl transferase subunit alpha from Campylobacter lari (strain RM2100 / D67 / ATCC BAA-1060).